A 379-amino-acid polypeptide reads, in one-letter code: Galactose-1-phosphate uridylyltransferase (379 aa).

Residues 1–15 are compositionally biased toward polar residues; the sequence is MSQSGADPEQRQQAS. Residues 1–20 are disordered; sequence MSQSGADPEQRQQASEADAM. A Zn(2+)-binding site is contributed by cysteine 75. UDP-alpha-D-glucose-binding positions include alanine 81, 97-98, and asparagine 173; that span reads ND. Histidine 184 is a Zn(2+) binding site. Residue histidine 186 is the Tele-UMP-histidine intermediate of the active site. Glutamine 188 is a binding site for UDP-alpha-D-glucose. The Zn(2+) site is built by glutamate 202, histidine 301, histidine 319, and histidine 321. UDP-alpha-D-glucose-binding positions include 334–337 and 339–340; these read KFMV and YE.

This sequence belongs to the galactose-1-phosphate uridylyltransferase type 1 family. As to quaternary structure, homodimer. Requires Zn(2+) as cofactor.

It catalyses the reaction alpha-D-galactose 1-phosphate + UDP-alpha-D-glucose = alpha-D-glucose 1-phosphate + UDP-alpha-D-galactose. The protein operates within carbohydrate metabolism; galactose metabolism. Functionally, plays an important role in galactose metabolism. The polypeptide is Galactose-1-phosphate uridylyltransferase (Galt) (Rattus norvegicus (Rat)).